A 310-amino-acid chain; its full sequence is MNNQTFITQFLLLGLPIPEEHQHLFYALFLVMYLTTILGNLLIIVLVQLDSQLHTPMYLFLSNLSFSDLCFSSVTMPKLLQNMRSQDTSIPYGGCLAQTYFFMVFGDMESFLLVAMAYDRYVAICFPLHYTSIMSPKLCTCLVLLLWMLTTSHAMMHTLLAARLSFCENNVVLNFFCDLFVLLKLACSDTYINELMIFIMSTLLIIIPFFLIVMSYARIISSILKVPSTQGICKVFSTCGSHLSVVSLFYGTIIGLYLCPAGNNSTVKEMVMAMMYTVVTPMLNPFIYSLRNRDMKRALIRVICSMKITL.

Residues 1-23 (MNNQTFITQFLLLGLPIPEEHQH) lie on the Extracellular side of the membrane. Asn-3 carries an N-linked (GlcNAc...) asparagine glycan. A helical transmembrane segment spans residues 24–48 (LFYALFLVMYLTTILGNLLIIVLVQ). Topologically, residues 49–55 (LDSQLHT) are cytoplasmic. Residues 56 to 77 (PMYLFLSNLSFSDLCFSSVTMP) traverse the membrane as a helical segment. The Extracellular portion of the chain corresponds to 78 to 98 (KLLQNMRSQDTSIPYGGCLAQ). The cysteines at positions 95 and 187 are disulfide-linked. Residues 99-118 (TYFFMVFGDMESFLLVAMAY) traverse the membrane as a helical segment. At 119 to 137 (DRYVAICFPLHYTSIMSPK) the chain is on the cytoplasmic side. The chain crosses the membrane as a helical span at residues 138–156 (LCTCLVLLLWMLTTSHAMM). At 157–194 (HTLLAARLSFCENNVVLNFFCDLFVLLKLACSDTYINE) the chain is on the extracellular side. Residues 195–217 (LMIFIMSTLLIIIPFFLIVMSYA) traverse the membrane as a helical segment. Residues 218 to 234 (RIISSILKVPSTQGICK) are Cytoplasmic-facing. A helical transmembrane segment spans residues 235 to 258 (VFSTCGSHLSVVSLFYGTIIGLYL). The Extracellular portion of the chain corresponds to 259-270 (CPAGNNSTVKEM). A helical transmembrane segment spans residues 271–290 (VMAMMYTVVTPMLNPFIYSL). At 291–310 (RNRDMKRALIRVICSMKITL) the chain is on the cytoplasmic side.

It belongs to the G-protein coupled receptor 1 family. Olfactory epithelium.

It localises to the cell membrane. Functionally, odorant receptor. This Rattus norvegicus (Rat) protein is Olfactory receptor 1496 (Olr1496).